A 603-amino-acid chain; its full sequence is Myotubularin (603 aa).

Residues 1-13 show a composition bias toward polar residues; that stretch reads MASAPTSKYNSHS. The interval 1 to 32 is disordered; the sequence is MASAPTSKYNSHSLENESIKRTSRDGVNRDVG. Residues Ser-13 and Ser-18 each carry the phosphoserine modification. Positions 14–32 are enriched in basic and acidic residues; sequence LENESIKRTSRDGVNRDVG. In terms of domain architecture, GRAM spans 29 to 97; sequence RDVGETLPRL…GVISRIEKMG (69 aa). Residues 163–538 form the Myotubularin phosphatase domain; it reads GWTVYNPVEE…RHLELWVNYY (376 aa). Positions 288, 313, and 314 each coordinate a 1,2-diacyl-sn-glycero-3-phospho-(1D-myo-inositol-3,5-bisphosphate). 3 residues coordinate a 1,2-diacyl-sn-glycero-3-phospho-(1D-myo-inositol-3-phosphate): Asn-288, Asn-313, and Ile-314. Cys-375 (phosphocysteine intermediate) is an active-site residue. Residues Ser-376, Asp-377, Gly-378, Trp-379, Asp-380, Arg-381, Lys-417, and Arg-421 each coordinate a 1,2-diacyl-sn-glycero-3-phospho-(1D-myo-inositol-3,5-bisphosphate). A 1,2-diacyl-sn-glycero-3-phospho-(1D-myo-inositol-3-phosphate)-binding residues include Ser-376, Asp-377, Gly-378, Trp-379, Asp-380, and Arg-381. Residue Arg-421 coordinates a 1,2-diacyl-sn-glycero-3-phospho-(1D-myo-inositol-3-phosphate). Residue Thr-495 is modified to Phosphothreonine. Residues 580–603 are disordered; the sequence is AKLSDPSASPSSPSQMMPHVQTHF. The segment covering 583–593 has biased composition (low complexity); the sequence is SDPSASPSSPS. Ser-588 bears the Phosphoserine mark.

Belongs to the protein-tyrosine phosphatase family. Non-receptor class myotubularin subfamily. Heterodimer with MTMR12. Interacts with KMT2A/MLL1 (via SET domain). Interacts with DES in skeletal muscle but not in cardiac muscle. Interacts with SPEG.

It localises to the cytoplasm. Its subcellular location is the cell membrane. It is found in the cell projection. The protein localises to the filopodium. The protein resides in the ruffle. It localises to the late endosome. Its subcellular location is the myofibril. It is found in the sarcomere. The catalysed reaction is a 1,2-diacyl-sn-glycero-3-phospho-(1D-myo-inositol-3-phosphate) + H2O = a 1,2-diacyl-sn-glycero-3-phospho-(1D-myo-inositol) + phosphate. It carries out the reaction a 1,2-diacyl-sn-glycero-3-phospho-(1D-myo-inositol-3,5-bisphosphate) + H2O = a 1,2-diacyl-sn-glycero-3-phospho-(1D-myo-inositol-5-phosphate) + phosphate. The enzyme catalyses 1,2-dioctanoyl-sn-glycero-3-phospho-(1-D-myo-inositol-3-phosphate) + H2O = 1,2-dioctanoyl-sn-glycero-3-phospho-(1D-myo-inositol) + phosphate. It catalyses the reaction 1,2-dioctanoyl-sn-glycero-3-phospho-(1D-myo-inositol-3,5-bisphosphate) + H2O = 1,2-dioctanoyl-sn-glycero-3-phospho-(1D-myo-inositol-5-phosphate) + phosphate. The catalysed reaction is 1,2-dihexadecanoyl-sn-glycero-3-phospho-(1D-myo-inositol-3,5-phosphate) + H2O = 1,2-dihexadecanoyl-sn-glycero-3-phospho-(1D-myo-inositol-5-phosphate) + phosphate. With respect to regulation, allosterically activated by phosphatidylinositol 5-phosphate (PI5P). Functionally, lipid phosphatase which dephosphorylates phosphatidylinositol 3-monophosphate (PI3P) and phosphatidylinositol 3,5-bisphosphate (PI(3,5)P2). Has also been shown to dephosphorylate phosphotyrosine- and phosphoserine-containing peptides. Negatively regulates EGFR degradation through regulation of EGFR trafficking from the late endosome to the lysosome. Plays a role in vacuolar formation and morphology. Regulates desmin intermediate filament assembly and architecture. Plays a role in mitochondrial morphology and positioning. Required for skeletal muscle maintenance but not for myogenesis. In skeletal muscles, stabilizes MTMR12 protein levels. The chain is Myotubularin from Bos taurus (Bovine).